The following is a 431-amino-acid chain: Ubiquitin-like modifier-activating enzyme 5 (431 aa).

5 residues coordinate ATP: G92, D113, K136, N159, and N197. Zn(2+) contacts are provided by C239 and C242. The active-site Glycyl thioester intermediate is the C263. C316 and C321 together coordinate Zn(2+). Positions 339-396 (AKAKMEADASTTIDEGPLHDDNEWNISVVDDENEKDTTKAASSSDTLPEGLTRELPVA) are disordered.

The protein belongs to the ubiquitin-activating E1 family. UBA5 subfamily.

E1-like enzyme which activates UFM1. The polypeptide is Ubiquitin-like modifier-activating enzyme 5 (Arabidopsis thaliana (Mouse-ear cress)).